The following is a 713-amino-acid chain: Polyribonucleotide nucleotidyltransferase (713 aa).

Positions 493 and 499 each coordinate Mg(2+). Positions 560 to 619 (PRMITIKINPEKIRDVIGKGGSVIRALTEETGTTIDISDDGVVTIASTNSEGMAEAKKRI) constitute a KH domain. Residues 629 to 697 (GHVYEGTVLK…EKGRVRLSAK (69 aa)) enclose the S1 motif domain.

The protein belongs to the polyribonucleotide nucleotidyltransferase family. It depends on Mg(2+) as a cofactor.

It is found in the cytoplasm. It catalyses the reaction RNA(n+1) + phosphate = RNA(n) + a ribonucleoside 5'-diphosphate. In terms of biological role, involved in mRNA degradation. Catalyzes the phosphorolysis of single-stranded polyribonucleotides processively in the 3'- to 5'-direction. This chain is Polyribonucleotide nucleotidyltransferase, found in Burkholderia mallei (strain NCTC 10247).